The chain runs to 142 residues: Malate dehydrogenase, mitochondrial (142 aa).

Residues 1-6 and aspartate 26 each bind NAD(+); that span reads ASGGIG. Positions 73 and 79 each coordinate substrate. NAD(+) is bound by residues asparagine 86 and 109–111; that span reads ITN. Substrate is bound at residue asparagine 111.

Belongs to the LDH/MDH superfamily. MDH type 1 family. As to quaternary structure, homodimer.

The protein resides in the mitochondrion matrix. The enzyme catalyses (S)-malate + NAD(+) = oxaloacetate + NADH + H(+). The chain is Malate dehydrogenase, mitochondrial from Schistosoma mansoni (Blood fluke).